The sequence spans 50 residues: MPQRTFLMMLIVICVTILCFVWMVRDSLCGLRLQQGNTVLVATLAYEVKR.

Residues Thr-5 to Arg-25 traverse the membrane as a helical segment.

The protein belongs to the Hok/Gef family.

The protein resides in the cell inner membrane. Toxic component of a type I toxin-antitoxin (TA) system. When expressed is involved in cellular Mg(2+) release and degradation of stable RNA. The polypeptide is Protein PndA (pndA) (Escherichia coli).